Consider the following 532-residue polypeptide: Fatty-acid amide hydrolase 2-A (532 aa).

The chain crosses the membrane as a helical span at residues 9–29; that stretch reads FLGRLLRAVVWILFAAFKLFA. Active-site charge relay system residues include Lys129 and Ser204. Ser228 acts as the Acyl-ester intermediate in catalysis.

Belongs to the amidase family.

It localises to the membrane. The catalysed reaction is N-(5Z,8Z,11Z,14Z-eicosatetraenoyl)-ethanolamine + H2O = ethanolamine + (5Z,8Z,11Z,14Z)-eicosatetraenoate. It carries out the reaction (9Z)-octadecenamide + H2O = (9Z)-octadecenoate + NH4(+). The chain is Fatty-acid amide hydrolase 2-A (faah2a) from Danio rerio (Zebrafish).